The chain runs to 335 residues: Methionine import ATP-binding protein MetN (335 aa).

An ABC transporter domain is found at 2–241 (IQFQRLHKSY…PKHATTRRFV (240 aa)). 38 to 45 (GHSGAGKS) contributes to the ATP binding site.

The protein belongs to the ABC transporter superfamily. Methionine importer (TC 3.A.1.24) family. In terms of assembly, the complex is composed of two ATP-binding proteins (MetN), two transmembrane proteins (MetI) and a solute-binding protein (MetQ).

Its subcellular location is the cell inner membrane. It catalyses the reaction L-methionine(out) + ATP + H2O = L-methionine(in) + ADP + phosphate + H(+). The enzyme catalyses D-methionine(out) + ATP + H2O = D-methionine(in) + ADP + phosphate + H(+). In terms of biological role, part of the ABC transporter complex MetNIQ involved in methionine import. Responsible for energy coupling to the transport system. The chain is Methionine import ATP-binding protein MetN from Xanthomonas euvesicatoria pv. vesicatoria (strain 85-10) (Xanthomonas campestris pv. vesicatoria).